Consider the following 125-residue polypeptide: Small ribosomal subunit protein uS11m (125 aa).

The protein belongs to the universal ribosomal protein uS11 family.

The protein localises to the mitochondrion. This Marchantia polymorpha (Common liverwort) protein is Small ribosomal subunit protein uS11m (RPS11).